The following is a 140-amino-acid chain: Sec-independent protein translocase protein TatB (140 aa).

A helical membrane pass occupies residues 1–21 (MFDIGFSELLLIAVVALVVLG). The tract at residues 119–140 (VHVTSPPPSTSTHGNNGQEKSQ) is disordered. Residues 128–140 (TSTHGNNGQEKSQ) are compositionally biased toward polar residues.

It belongs to the TatB family. As to quaternary structure, the Tat system comprises two distinct complexes: a TatABC complex, containing multiple copies of TatA, TatB and TatC subunits, and a separate TatA complex, containing only TatA subunits. Substrates initially bind to the TatABC complex, which probably triggers association of the separate TatA complex to form the active translocon.

The protein resides in the cell inner membrane. Its function is as follows. Part of the twin-arginine translocation (Tat) system that transports large folded proteins containing a characteristic twin-arginine motif in their signal peptide across membranes. Together with TatC, TatB is part of a receptor directly interacting with Tat signal peptides. TatB may form an oligomeric binding site that transiently accommodates folded Tat precursor proteins before their translocation. This is Sec-independent protein translocase protein TatB from Xylella fastidiosa (strain 9a5c).